The primary structure comprises 288 residues: ATP synthase gamma chain (288 aa).

The protein belongs to the ATPase gamma chain family. As to quaternary structure, F-type ATPases have 2 components, CF(1) - the catalytic core - and CF(0) - the membrane proton channel. CF(1) has five subunits: alpha(3), beta(3), gamma(1), delta(1), epsilon(1). CF(0) has three main subunits: a, b and c.

It localises to the cell inner membrane. Its function is as follows. Produces ATP from ADP in the presence of a proton gradient across the membrane. The gamma chain is believed to be important in regulating ATPase activity and the flow of protons through the CF(0) complex. The protein is ATP synthase gamma chain of Blochmanniella pennsylvanica (strain BPEN).